A 504-amino-acid polypeptide reads, in one-letter code: Maturase K (504 aa).

It belongs to the intron maturase 2 family. MatK subfamily.

The protein localises to the plastid. Its subcellular location is the chloroplast. Functionally, usually encoded in the trnK tRNA gene intron. Probably assists in splicing its own and other chloroplast group II introns. In Rorippa amphibia (Great yellow-cress), this protein is Maturase K.